Reading from the N-terminus, the 1343-residue chain is ABC multidrug transporter atrD (1343 aa).

Polar residues predominate over residues 1–10; that stretch reads MSPLETNPLS. The tract at residues 1–67 is disordered; sequence MSPLETNPLS…HRPKSSSSNN (67 aa). Positions 20–31 are enriched in low complexity; that stretch reads ETSTTEEQASTP. An N-linked (GlcNAc...) asparagine glycan is attached at Asn-99. The next 4 helical transmembrane spans lie at 114–134, 163–183, 235–255, and 263–283; these read ILIM…LPLF, YFVY…VGFI, KVGL…IAYV, and ICSS…QFII. Residues 115 to 403 enclose the ABC transmembrane type-1 1 domain; sequence LIMVISTICA…VSPNAQAFTN (289 aa). N-linked (GlcNAc...) asparagine glycosylation occurs at Asn-309. 2 helical membrane-spanning segments follow: residues 339–359 and 366–386; these read IVMG…YGLG and FLVD…AILI. Positions 438–683 constitute an ABC transporter 1 domain; sequence IELRNVKHIY…GGAYRKLVEA (246 aa). 473-480 lines the ATP pocket; that stretch reads GPSGSGKS. A glycan (N-linked (GlcNAc...) asparagine) is linked at Asn-545. The next 2 membrane-spanning stretches (helical) occupy residues 773–793 and 820–840; these read MLIG…QAVL and LMFF…GAAF. Residues 774-1063 form the ABC transmembrane type-1 2 domain; it reads LIGLVFSVLA…VFSFAPDMGK (290 aa). Asn-872 carries N-linked (GlcNAc...) asparagine glycosylation. The next 4 helical transmembrane spans lie at 887–907, 920–942, 1010–1030, and 1037–1057; these read HLSG…TTLG, LALV…FYML, ALVF…LGHH, and FFVC…VFSF. Residue Asn-1083 is glycosylated (N-linked (GlcNAc...) asparagine). Residues 1098–1336 form the ABC transporter 2 domain; it reads IEFRNVHFRY…KGRYYELVNL (239 aa). An ATP-binding site is contributed by 1133 to 1140; the sequence is GPSGCGKS.

Belongs to the ABC transporter superfamily. ABCB family. Multidrug resistance exporter (TC 3.A.1.201) subfamily.

Its subcellular location is the cell membrane. Fenamirol efflux transporter activity is inhibited by the cyclosporin derivative PSC 833, nigericin, reserpine and valinomycin. The effect of reserpine is transiant, while that of the cyclosporin derivative PSC 833, nigericin and valinomycin is proportional to the time of exposure. Cyclohexinmide has inhibitory effect only when applied prior to addition of the fungicide. Pleiotropic ABC efflux transporter involved in the protection of the cells against a wide range of toxic compounds. Confers resistance to the azole fenarimol via efflux transport. May also be involved in the secretion of penicillin. This Emericella nidulans (strain FGSC A4 / ATCC 38163 / CBS 112.46 / NRRL 194 / M139) (Aspergillus nidulans) protein is ABC multidrug transporter atrD.